The primary structure comprises 225 residues: Ribonuclease 3 (225 aa).

Residues 7–129 (LPRLGRILGY…IIGAIYLDAD (123 aa)) enclose the RNase III domain. Glutamate 42 is a binding site for Mg(2+). The active site involves aspartate 46. Residues aspartate 115 and glutamate 118 each contribute to the Mg(2+) site. Residue glutamate 118 is part of the active site. The 71-residue stretch at 155–225 (DPKTLLQEHL…AAEVLERIKK (71 aa)) folds into the DRBM domain.

The protein belongs to the ribonuclease III family. As to quaternary structure, homodimer. Mg(2+) is required as a cofactor.

The protein localises to the cytoplasm. It carries out the reaction Endonucleolytic cleavage to 5'-phosphomonoester.. Digests double-stranded RNA. Involved in the processing of primary rRNA transcript to yield the immediate precursors to the large and small rRNAs (23S and 16S). Processes some mRNAs, and tRNAs when they are encoded in the rRNA operon. Processes pre-crRNA and tracrRNA of type II CRISPR loci if present in the organism. This Shewanella loihica (strain ATCC BAA-1088 / PV-4) protein is Ribonuclease 3.